The following is a 514-amino-acid chain: Probable cytochrome P450 6w1 (514 aa).

Cys-450 contacts heme.

The protein belongs to the cytochrome P450 family. The cofactor is heme.

The protein resides in the endoplasmic reticulum membrane. It localises to the microsome membrane. In terms of biological role, may be involved in the metabolism of insect hormones and in the breakdown of synthetic insecticides. This Drosophila melanogaster (Fruit fly) protein is Probable cytochrome P450 6w1 (Cyp6w1).